The sequence spans 447 residues: Phosphoglucosamine mutase (447 aa).

S103 functions as the Phosphoserine intermediate in the catalytic mechanism. Mg(2+)-binding residues include S103, D242, D244, and D246. At S103 the chain carries Phosphoserine.

This sequence belongs to the phosphohexose mutase family. It depends on Mg(2+) as a cofactor. Post-translationally, activated by phosphorylation.

It catalyses the reaction alpha-D-glucosamine 1-phosphate = D-glucosamine 6-phosphate. Its function is as follows. Catalyzes the conversion of glucosamine-6-phosphate to glucosamine-1-phosphate. The sequence is that of Phosphoglucosamine mutase from Dinoroseobacter shibae (strain DSM 16493 / NCIMB 14021 / DFL 12).